A 478-amino-acid chain; its full sequence is Multidrug resistance outer membrane protein MdtQ (478 aa).

Positions 1–21 (MNRDSFYPAIACFPLLLMLAG) are cleaved as a signal peptide. Residue Cys22 is the site of N-palmitoyl cysteine attachment. The S-diacylglycerol cysteine moiety is linked to residue Cys22.

It belongs to the outer membrane factor (OMF) (TC 1.B.17) family.

It localises to the cell outer membrane. Functionally, could be involved in resistance to puromycin, acriflavine and tetraphenylarsonium chloride. This Escherichia coli O157:H7 protein is Multidrug resistance outer membrane protein MdtQ (mdtQ).